The chain runs to 465 residues: Iron-sulfur cluster assembly SufBD family protein SAUSA300_0822 (465 aa).

It belongs to the iron-sulfur cluster assembly SufBD family.

The polypeptide is Iron-sulfur cluster assembly SufBD family protein SAUSA300_0822 (Staphylococcus aureus (strain USA300)).